We begin with the raw amino-acid sequence, 250 residues long: UDP-2,3-diacylglucosamine hydrolase (250 aa).

5 residues coordinate Mn(2+): Asp8, His10, Asp41, Asn79, and His114. 79-80 provides a ligand contact to substrate; sequence NR. 5 residues coordinate substrate: Asp122, Ser160, Asp172, Gln175, and His203. Mn(2+) contacts are provided by His203 and His205.

The protein belongs to the LpxH family. Mn(2+) serves as cofactor.

The protein localises to the cell inner membrane. It catalyses the reaction UDP-2-N,3-O-bis[(3R)-3-hydroxytetradecanoyl]-alpha-D-glucosamine + H2O = 2-N,3-O-bis[(3R)-3-hydroxytetradecanoyl]-alpha-D-glucosaminyl 1-phosphate + UMP + 2 H(+). The protein operates within glycolipid biosynthesis; lipid IV(A) biosynthesis; lipid IV(A) from (3R)-3-hydroxytetradecanoyl-[acyl-carrier-protein] and UDP-N-acetyl-alpha-D-glucosamine: step 4/6. In terms of biological role, hydrolyzes the pyrophosphate bond of UDP-2,3-diacylglucosamine to yield 2,3-diacylglucosamine 1-phosphate (lipid X) and UMP by catalyzing the attack of water at the alpha-P atom. Involved in the biosynthesis of lipid A, a phosphorylated glycolipid that anchors the lipopolysaccharide to the outer membrane of the cell. This chain is UDP-2,3-diacylglucosamine hydrolase, found in Xylella fastidiosa (strain M23).